A 734-amino-acid chain; its full sequence is Tripartite terminase subunit 3 (734 aa).

Positions 183 to 189 (PKKRAKV) match the Nuclear localization signal motif. Positions 258–265 (VPRRHGKT) match the Walker A motif motif. Residues 352–357 (LLFVDE) carry the Walker B motif motif. Glu357 acts as the For ATPase activity in catalysis. Catalysis depends on for nuclease activity residues Asp509, Glu581, and Asp706.

This sequence belongs to the herpesviridae TRM3 protein family. As to quaternary structure, interacts with the terminase subunits TRM1 and TRM2. Interacts with portal protein.

The protein localises to the host nucleus. Component of the molecular motor that translocates viral genomic DNA in empty capsid during DNA packaging. Forms a tripartite terminase complex together with TRM1 and TRM2 in the host cytoplasm. Once the complex reaches the host nucleus, it interacts with the capsid portal vertex. This portal forms a ring in which genomic DNA is translocated into the capsid. TRM3 carries an RNase H-like nuclease activity that plays an important role for the cleavage of concatemeric viral DNA into unit length genomes. The sequence is that of Tripartite terminase subunit 3 from Human herpesvirus 2 (strain HG52) (HHV-2).